The chain runs to 494 residues: Solute carrier family 2, facilitated glucose transporter member 3 (494 aa).

Residues M1–L10 are Cytoplasmic-facing. The chain crosses the membrane as a helical span at residues I11–N32. Over A33 to S64 the chain is Extracellular. N-linked (GlcNAc...) asparagine glycosylation is present at N43. Residues L65–V85 form a helical membrane-spanning segment. Residues N86–R90 are Cytoplasmic-facing. Residues G91 to C111 form a helical membrane-spanning segment. Residues K112–E118 are Extracellular-facing. Residues M119–I142 traverse the membrane as a helical segment. The Cytoplasmic segment spans residues G143–A153. The chain crosses the membrane as a helical span at residues F154–L174. Q159 is a binding site for D-glucose. Over K175–L183 the chain is Extracellular. Residues W184–F204 traverse the membrane as a helical segment. Topologically, residues C205–P269 are cytoplasmic. A Phosphothreonine modification is found at T232. A helical transmembrane segment spans residues I270–Y290. The segment at Q277–S279 is important for selectivity against fructose. Residues Q280–Q281 and N286 contribute to the D-glucose site. Residues Y291 to P304 are Extracellular-facing. The chain crosses the membrane as a helical span at residues V305–L325. A D-glucose-binding site is contributed by N315. Topologically, residues V326–R331 are cytoplasmic. The chain crosses the membrane as a helical span at residues R332 to S352. Residues L353–S363 lie on the Extracellular side of the membrane. N358 carries an N-linked (GlcNAc...) asparagine glycan. Residues F364–V389 form a helical membrane-spanning segment. 2 residues coordinate D-glucose: E378 and W386. The Cytoplasmic portion of the chain corresponds to A390–P399. The helical transmembrane segment at A400–F420 threads the bilayer. Over P421–A429 the chain is Extracellular. Residues Y430–V450 form a helical membrane-spanning segment. Topologically, residues P451 to A494 are cytoplasmic. The interval T469 to A494 is disordered. Over residues N484–A494 the composition is skewed to polar residues. Position 485 is a phosphoserine (S485). Residue T492 is modified to Phosphothreonine.

This sequence belongs to the major facilitator superfamily. Sugar transporter (TC 2.A.1.1) family. Glucose transporter subfamily. As to quaternary structure, interacts with SMIM43; the interaction may promote SLC2A1-mediated glucose transport to meet the energy needs of mesendoderm differentiation.

It is found in the cell membrane. It localises to the perikaryon. The protein localises to the cell projection. The enzyme catalyses D-glucose(out) = D-glucose(in). It carries out the reaction D-galactose(in) = D-galactose(out). Deoxyglucose transport is inhibited by D-glucose, D-galactose and maltose. Galactose transport is inhibited by D-glucose and maltose. Facilitative glucose transporter. Can also mediate the uptake of various other monosaccharides across the cell membrane. Mediates the uptake of glucose, 2-deoxyglucose, galactose, mannose, xylose and fucose, and probably also dehydroascorbate. Does not mediate fructose transport. Required for mesendoderm differentiation. The polypeptide is Solute carrier family 2, facilitated glucose transporter member 3 (Bos taurus (Bovine)).